The sequence spans 1890 residues: Proteasome-associated protein ECM29 homolog (1890 aa).

18 HEAT repeats span residues 6–29 (NAEIELLERVLLRLGNADSDEKLE), 30–67 (AAVGKFLTPVILKMNSPHNVVRTKVVEVLTHIKRRLSS), 130–167 (DKLFALLLPVLSDMKIPDDPTQRSKLLDLQDKPAICAN), 226–263 (FSDLQIFVPLVVASADTRFSVATPAITELSKLCTMLDF), 294–330 (RVRQKLLQYLIKCRGKSINVTKGLQVTFDGFFGTNTN), 334–354 (KVLALQFMELLLRDGPRELVS), 355–395 (KVSK…SFPQ), 459–496 (GQQHLLLAMLLDNAESKVQIVQNVTSVFLTSCYPEYYA), 498–523 (ARYLLLLIAGERNSLRENVTTYLYGT), 524–561 (SKKDHINYSMLSSIDHSKNRISSESISDFNHLSLEQRR), 565–602 (PSFQVMMSHVHEMAEKRLKKNTACVVVGRTKLPYSLEV), 685–722 (AKQLHLLEPLGNTLKDVSETMRINVAQVYGILWAFGLS), 776–813 (PQFVNAVKIISKCLCESQWLLVSAAVKCISMIGKAVEI), 843–882 (STKLVIFGVVFQLLRSSSARQKIREDSARCLGYLAIGDGE), 938–975 (DDFDQFLNSLIRLVTDPNPHSRQAISVWLLAVVKHCSQ), 980–1018 (LAKKELLQFAFTELLSDDSEFVQDVASRGLGLVYSISDS), 1118–1155 (PYLGKIIPRLYRYKYDPTPKIQNSMISIWDTIVTDSKE), and 1159–1196 (RYYWEILRELLDNLTCKEWRVRIACCLAVRDLLNRPNG). The residue at position 1213 (Ser1213) is a Phosphoserine. HEAT repeat units lie at residues 1271 to 1309 (AVASSILPFLLETGVGHKVPEIRRVSIKTISDMIDSSGS), 1313 to 1350 (PHLATLIPCLLRATGELENTKLSYVSTRLGADNEAQEA), 1378 to 1415 (SVLEKMTPEVLELMKGSVNLGTKIGCAHFVCLISIRLG), 1416 to 1457 (KEMT…LAKE), 1497 to 1534 (DYMDSMLPLIFFAMHEEPNEETKANVELWKDLWHDVSP), 1541 to 1578 (LNLNVIIPKLESSLTDASWSRKAQAANAIQTIATRLSS), 1583 to 1620 (PDRLRLIKLLLSGLQGRTFEGKERLLQALAALTKGLDR), and 1623 to 1660 (QICSSIIDAAMREARKREPVYRTMALASLGEILDQLEA). Residues 1680 to 1702 (RKESDDEDEPNTSQELSADERNK) form a disordered region. Ser1683 carries the phosphoserine modification. Thr1691 is modified (phosphothreonine). Ser1692 carries the phosphoserine modification. 2 HEAT repeats span residues 1751–1788 (PVQVSLLAALTKYIERLHVFDESAQVPDLTQINQEKKI) and 1826–1863 (KEALNIVLMLIKRLSGSGNGNQQPLRLIKQSFESNLEK).

In terms of assembly, associated with the proteasome.

It is found in the cytoplasm. The chain is Proteasome-associated protein ECM29 homolog from Drosophila melanogaster (Fruit fly).